The sequence spans 798 residues: MSSSPVNVKKLKVSELKEELKKRRLSDKGLKADLMDRLQAALDNEAGGRPAMEPGNGSLDLGGDAAGRSGAGLEQEAAAGAEDDEEEEGIAALDGDQMELGEENGAAGAADAGAMEEEEAASEDENGDDQGFQEGEDELGDEEEGAGDENGHGEQQSQPPAAAQQASQQRGPGKEAAGKSSGPTSLFAVTVAPPGARQGQQQAGGDGKTEQKAGDKKRGVKRPREDHGRGYFEYIEENKYSRAKSPQPPVEEEDEHFDDTVVCLDTYNCDLHFKISRDRLSASSLTMESFAFLWAGGRASYGVSKGKVCFEMKVTEKIPVRHLYTKDIDIHEVRIGWSLTTSGMLLGEEEFSYGYSLKGIKTCNCETEDYGEKFDENDVITCFANFETDEVELSYAKNGQDLGVAFKISKEVLADRPLFPHVLCHNCAVEFNFGQKEKPYFPIPEDCTFIQNVPLEDRVRGPKGPEEKKDCEVVMMIGLPGAGKTTWVTKHAAENPGKYNILGTNTIMDKMMVAGFKKQMADTGKLNTLLQRAPQCLGKFIEIAARKKRNFILDQTNVSAAAQRRKMCLFAGFQRKAVVVCPKDEDYKQRTQKKAEVEGKDLPEHAVLKMKGNFTLPEVAECFDEITYVELQKEEAQKLLEQYKEESKKALPPEKKQNTGSKKSNKNKSGKNQFNRGGGHRGRGGFNMRGGNFRGGAPGNRGGYNRRGNMPQRGGGGGSGGIGYPYPRGPVFPGRGGYSNRGNYNRGGMPNRGNYNQNFRGRGNNRGYKNQSQGYNQWQQGQFWGQKPWSQHYHQGYY.

Residue Ser2 is modified to N-acetylserine. At Ser4 the chain carries Phosphoserine. In terms of domain architecture, SAP spans 8–42; the sequence is VKKLKVSELKEELKKRRLSDKGLKADLMDRLQAAL. An N6-acetyllysine mark is found at Lys17 and Lys21. Residues 41-229 form a disordered region; the sequence is ALDNEAGGRP…VKRPREDHGR (189 aa). Ser58 carries the phosphoserine modification. 2 stretches are compositionally biased toward low complexity: residues 71-80 and 103-113; these read AGLEQEAAAG and ENGAAGAADAG. 2 stretches are compositionally biased toward acidic residues: residues 114-128 and 134-147; these read AMEE…ENGD and EGED…EGAG. Residues 153-169 are compositionally biased toward low complexity; it reads GEQQSQPPAAAQQASQQ. The residue at position 179 (Lys179) is an N6-acetyllysine. Residue Ser180 is modified to ADP-ribosylserine. Low complexity predominate over residues 192 to 203; the sequence is APPGARQGQQQA. Positions 207–229 are enriched in basic and acidic residues; that stretch reads GKTEQKAGDKKRGVKRPREDHGR. Arg229 bears the Citrulline mark. N6-acetyllysine; alternate is present on Lys239. Lys239 is covalently cross-linked (Glycyl lysine isopeptide (Lys-Gly) (interchain with G-Cter in SUMO1); alternate). Lys239 participates in a covalent cross-link: Glycyl lysine isopeptide (Lys-Gly) (interchain with G-Cter in SUMO2); alternate. Tyr240 carries the phosphotyrosine modification. Residues Ser241 and Ser245 each carry the phosphoserine modification. The B30.2/SPRY domain occupies 242-438; the sequence is RAKSPQPPVE…VEFNFGQKEK (197 aa). Phosphothreonine is present on Thr260. Lys326 carries the N6-acetyllysine modification. The tract at residues 462-646 is ATPase domain; that stretch reads PKGPEEKKDC…QKLLEQYKEE (185 aa). Residue Lys469 forms a Glycyl lysine isopeptide (Lys-Gly) (interchain with G-Cter in SUMO2) linkage. 478 to 485 lines the ATP pocket; sequence GLPGAGKT. Lys490 and Lys498 each carry N6-acetyllysine; alternate. Glycyl lysine isopeptide (Lys-Gly) (interchain with G-Cter in SUMO2); alternate cross-links involve residues Lys490 and Lys498. Thr506 carries the post-translational modification Phosphothreonine. Lys510 participates in a covalent cross-link: Glycyl lysine isopeptide (Lys-Gly) (interchain with G-Cter in SUMO2). Lys525 bears the N6-acetyllysine mark. Residue Lys539 is modified to N6-acetyllysine; alternate. A Glycyl lysine isopeptide (Lys-Gly) (interchain with G-Cter in SUMO2); alternate cross-link involves residue Lys539. A Glycyl lysine isopeptide (Lys-Gly) (interchain with G-Cter in SUMO2) cross-link involves residue Lys548. At Thr556 the chain carries Phosphothreonine. Glycyl lysine isopeptide (Lys-Gly) (interchain with G-Cter in SUMO2) cross-links involve residues Lys583 and Lys600. Residues 585-600 form an actin-binding region; the sequence is EDYKQRTQKKAEVEGK. Position 609 is an N6-acetyllysine; alternate (Lys609). Lys609 participates in a covalent cross-link: Glycyl lysine isopeptide (Lys-Gly) (interchain with G-Cter in SUMO2); alternate. The stretch at 624–651 forms a coiled coil; it reads DEITYVELQKEEAQKLLEQYKEESKKAL. Residues Lys638 and Lys644 each participate in a glycyl lysine isopeptide (Lys-Gly) (interchain with G-Cter in SUMO2) cross-link. A compositionally biased stretch (basic and acidic residues) spans 645 to 657; sequence EESKKALPPEKKQ. A disordered region spans residues 645 to 727; it reads EESKKALPPE…GSGGIGYPYP (83 aa). Arg676 carries the post-translational modification Omega-N-methylarginine. The span at 684–702 shows a compositional bias: gly residues; it reads GGFNMRGGNFRGGAPGNRG. The RNA-binding RGG-box stretch occupies residues 688–713; sequence MRGGNFRGGAPGNRGGYNRRGNMPQR. An asymmetric dimethylarginine mark is found at Arg689, Arg694, and Arg701. An asymmetric dimethylarginine; alternate mark is found at Arg707 and Arg713. Omega-N-methylarginine; alternate is present on residues Arg707 and Arg713. Residues 713–723 are compositionally biased toward gly residues; sequence RGGGGGSGGIG. Asymmetric dimethylarginine is present on residues Arg728 and Arg735. The segment at 743–772 is disordered; that stretch reads NYNRGGMPNRGNYNQNFRGRGNNRGYKNQS. Lys787 bears the N6-acetyllysine; alternate mark. Lys787 is covalently cross-linked (Glycyl lysine isopeptide (Lys-Gly) (interchain with G-Cter in SUMO2); alternate).

In terms of assembly, oligomer (via ATPase domain and RNA-binding RGG-box region); oligomerization occurs upon ATP-binding in a chromatin-associated RNAs (caRNAs)- and transcription-dependent manner and is required for chromatin decompaction. ATP hydrolysis is required to cycle from an oligomeric to monomeric state to compact chromatin. Component of the coding region determinant (CRD)-mediated complex, composed of DHX9, HNRNPU, IGF2BP1, SYNCRIP and YBX1. Identified in the spliceosome C complex. Identified in a IGF2BP1-dependent mRNP granule complex containing untranslated mRNAs. Associates with heterogeneous nuclear ribonucleoprotein (hnRNP) particles. Associates (via middle region) with the C-terminal domain (CTD) RNA polymerase II (Pol II) holoenzyme; this association occurs in a RNA-independent manner. Associates (via middle region) with the core-TFIIH basal transcription factor complex; this association inhibits the CTD phosphorylation of RNA polymerase II holoenzyme by down-regulating TFIIH kinase activity. Associates with the telomerase holoenzyme complex. Associates with spindle microtubules (MTs) in a TPX2-dependent manner. Interacts (via C-terminus) with actin; this interaction is direct and mediates association with the phosphorylated CTD of RNA polymerase II and is disrupted in presence of the long non-coding H19 RNA. Interacts with AURKA. Interacts (via C-terminus) with CBX5; this interaction is, at least in part, RNA-dependent. Interacts with CR2. Interacts with CRY1. Interacts (via C-terminus) with EP300; this interaction enhances DNA-binding to nuclear scaffold/matrix attachment region (S/MAR) elements. Interacts with ERBB4. Interacts with GEMIN5. Interacts with IGF2BP1. Interacts with IGF2BP2 and IGF2BP3. Interacts with NCL; this interaction occurs during mitosis. Interacts (via C-terminus) with NR3C1 (via C-terminus). Interacts with PLK1; this interaction induces phosphorylation of HNRNPU at Ser-58 in mitosis. Interacts with POU3F4. Interacts with SMARCA4; this interaction occurs in embryonic stem cells and stimulates global Pol II-mediated transcription. Interacts (via C-terminus) with TOP2A; this interaction protects the topoisomerase TOP2A from degradation and positively regulates the relaxation of supercoiled DNA by TOP2A in a RNA-dependent manner. Interacts with TPX2; this interaction recruits HNRNPU to spindle microtubules (MTs). Interacts with UBQLN2. Interacts (via RNA-binding RGG-box region) with ZBTB7B; the interaction facilitates the recruitment of long non-coding RNA Blnc1 by ZBTB7B. Interacts with ERCC6. In terms of processing, cleaved at Asp-94 by CASP3 during T-cell apoptosis, resulting in a loss of DNA- and chromatin-binding activities. Extensively phosphorylated. Phosphorylated on Ser-58 by PLK1 and dephosphorylated by protein phosphatase 2A (PP2A) in mitosis. Post-translationally, arg-707 and Arg-713 are dimethylated, probably to asymmetric dimethylarginine. In terms of processing, citrullinated by PADI4.

It localises to the nucleus. It is found in the nucleus matrix. The protein resides in the chromosome. The protein localises to the nucleus speckle. Its subcellular location is the cytoplasm. It localises to the cytoskeleton. It is found in the microtubule organizing center. The protein resides in the centrosome. The protein localises to the centromere. Its subcellular location is the kinetochore. It localises to the spindle. It is found in the spindle pole. The protein resides in the midbody. The protein localises to the cell surface. Its subcellular location is the cytoplasmic granule. In terms of biological role, DNA- and RNA-binding protein involved in several cellular processes such as nuclear chromatin organization, telomere-length regulation, transcription, mRNA alternative splicing and stability, Xist-mediated transcriptional silencing and mitotic cell progression. Plays a role in the regulation of interphase large-scale gene-rich chromatin organization through chromatin-associated RNAs (caRNAs) in a transcription-dependent manner, and thereby maintains genomic stability. Required for the localization of the long non-coding Xist RNA on the inactive chromosome X (Xi) and the subsequent initiation and maintenance of X-linked transcriptional gene silencing during X-inactivation. Required for the topoisomerase TOP2A protein stability and activity in a RNA-dependent manner. Plays a role as a RNA polymerase II (Pol II) holoenzyme transcription regulator. Promotes transcription initiation by direct association with the core-TFIIH basal transcription factor complex for the assembly of a functional pre-initiation complex with Pol II in a actin-dependent manner. Blocks Pol II transcription elongation activity by inhibiting the C-terminal domain (CTD) phosphorylation of Pol II and dissociates from Pol II pre-initiation complex prior to productive transcription elongation. Positively regulates CBX5-induced transcriptional gene silencing and retention of CBX5 in the nucleus. Negatively regulates glucocorticoid-mediated transcriptional activation. Key regulator of transcription initiation and elongation in embryonic stem cells upon leukemia inhibitory factor (LIF) signaling. Involved in the long non-coding RNA H19-mediated Pol II transcriptional repression. Participates in the circadian regulation of the core clock component BMAL1 transcription. Plays a role in the regulation of telomere length. Plays a role as a global pre-mRNA alternative splicing modulator by regulating U2 small nuclear ribonucleoprotein (snRNP) biogenesis. Plays a role in mRNA stability. Component of the CRD-mediated complex that promotes MYC mRNA stabilization. Enhances the expression of specific genes, such as tumor necrosis factor TNFA, by regulating mRNA stability, possibly through binding to the 3'-untranslated region (UTR). Plays a role in mitotic cell cycle regulation. Involved in the formation of stable mitotic spindle microtubules (MTs) attachment to kinetochore, spindle organization and chromosome congression. Phosphorylation at Ser-58 by PLK1 is required for chromosome alignement and segregation and progression through mitosis. Also contributes to the targeting of AURKA to mitotic spindle MTs. Binds to double- and single-stranded DNA and RNA, poly(A), poly(C) and poly(G) oligoribonucleotides. Binds to chromatin-associated RNAs (caRNAs). Associates with chromatin to scaffold/matrix attachment region (S/MAR) elements in DNA. Associates with chromatin in a chromatin-associated RNAs (caRNAs)-dependent manner. Binds to the Xist RNA. Binds the long non-coding H19 RNA. Binds to SMN1/2 pre-mRNAs at G/U-rich regions. Binds to small nuclear RNAs (snRNAs). Binds to the 3'-UTR of TNFA mRNA. Binds (via RNA-binding RGG-box region) to the long non-coding Xist RNA; this binding is direct and bridges the Xist RNA and the inactive chromosome X (Xi). Also negatively regulates embryonic stem cell differentiation upon LIF signaling. Required for embryonic development. Binds to brown fat long non-coding RNA 1 (Blnc1); facilitates the recruitment of Blnc1 by ZBTB7B required to drive brown and beige fat development and thermogenesis. The chain is Heterogeneous nuclear ribonucleoprotein U from Rattus norvegicus (Rat).